Reading from the N-terminus, the 188-residue chain is Peptidyl-tRNA hydrolase (188 aa).

Tyrosine 14 is a binding site for tRNA. Histidine 19 (proton acceptor) is an active-site residue. Residues phenylalanine 64, asparagine 66, and asparagine 112 each coordinate tRNA.

It belongs to the PTH family. Monomer.

The protein localises to the cytoplasm. It carries out the reaction an N-acyl-L-alpha-aminoacyl-tRNA + H2O = an N-acyl-L-amino acid + a tRNA + H(+). In terms of biological role, hydrolyzes ribosome-free peptidyl-tRNAs (with 1 or more amino acids incorporated), which drop off the ribosome during protein synthesis, or as a result of ribosome stalling. Functionally, catalyzes the release of premature peptidyl moieties from peptidyl-tRNA molecules trapped in stalled 50S ribosomal subunits, and thus maintains levels of free tRNAs and 50S ribosomes. The polypeptide is Peptidyl-tRNA hydrolase (Enterococcus faecalis (strain ATCC 700802 / V583)).